Consider the following 205-residue polypeptide: Large ribosomal subunit protein bL25 (205 aa).

The segment at 180–205 is disordered; it reads HEEVAEEAEETEGEDAEEAPAAEGEE. Residues 183–205 are compositionally biased toward acidic residues; sequence VAEEAEETEGEDAEEAPAAEGEE.

The protein belongs to the bacterial ribosomal protein bL25 family. CTC subfamily. Part of the 50S ribosomal subunit; part of the 5S rRNA/L5/L18/L25 subcomplex. Contacts the 5S rRNA. Binds to the 5S rRNA independently of L5 and L18.

In terms of biological role, this is one of the proteins that binds to the 5S RNA in the ribosome where it forms part of the central protuberance. This is Large ribosomal subunit protein bL25 from Corynebacterium diphtheriae (strain ATCC 700971 / NCTC 13129 / Biotype gravis).